The primary structure comprises 46 residues: Esculentin-1 (46 aa).

Cys-40 and Cys-46 form a disulfide bridge.

The protein belongs to the frog skin active peptide (FSAP) family. Brevinin subfamily. Expressed by the skin glands.

Its subcellular location is the secreted. Shows antibacterial activity against representative Gram-negative and Gram-positive bacterial species, and hemolytic activity. In Pelophylax lessonae (Pool frog), this protein is Esculentin-1.